The chain runs to 61 residues: Small ribosomal subunit protein uS14 (61 aa).

Residues cysteine 24, cysteine 27, cysteine 40, and cysteine 43 each contribute to the Zn(2+) site.

This sequence belongs to the universal ribosomal protein uS14 family. Zinc-binding uS14 subfamily. In terms of assembly, part of the 30S ribosomal subunit. Contacts proteins S3 and S10. Requires Zn(2+) as cofactor.

Its function is as follows. Binds 16S rRNA, required for the assembly of 30S particles and may also be responsible for determining the conformation of the 16S rRNA at the A site. The sequence is that of Small ribosomal subunit protein uS14 from Rhodopirellula baltica (strain DSM 10527 / NCIMB 13988 / SH1).